Consider the following 465-residue polypeptide: MYSPGAGSGAAGERKLCLLSLLLIGALGCAICHGNPVDDICIAKPRDIPVNPLCIYRSPGKKATEEDGSEQKVPEATNRRVWELSKANSRFATNFYQHLADSKNDNDNIFLSPLSISTAFAMTKLGACNDTLKQLMEVFKFDTISEKTSDQIHFFFAKLNCRLYRKANKSSDLVSANRLFGDKSLTFNESYQDVSEVVYGAKLQPLDFKENPEQSRVTINNWVANKTEGRIKDVIPQGAINELTALVLVNTIYFKGLWKSKFSPENTRKEPFYKVDGQSCPVPMMYQEGKFKYRRVAEGTQVLELPFKGDDITMVLILPKPEKSLAKVEQELTPELLQEWLDELSETMLVVHMPRFRTEDGFSLKEQLQDMGLIDLFSPEKSQLPGIVAGGRDDLYVSDAFHKAFLEVNEEGSEAAASTSVVITGRSLNPNRVTFKANRPFLVLIREVALNTIIFMGRVANPCVN.

Positions 1–32 (MYSPGAGSGAAGERKLCLLSLLLIGALGCAIC) are cleaved as a signal peptide. Cystine bridges form between Cys41–Cys161 and Cys54–Cys128. Phosphothreonine is present on Thr64. Ser69 carries the phosphoserine modification. A heparin-binding site is contributed by Trp82. Residue Asn129 is glycosylated (N-linked (GlcNAc...) asparagine). Arg162 contacts heparin. An N-linked (GlcNAc...) asparagine glycan is attached at Asn168. Arg178 is a heparin binding site. N-linked (GlcNAc...) asparagine glycosylation is found at Asn188 and Asn225. The cysteines at positions 280 and 463 are disulfide-linked.

It belongs to the serpin family. As to quaternary structure, forms protease inhibiting heterodimer with TMPRSS7. Phosphorylated by FAM20C in the extracellular medium. Plasma.

Its subcellular location is the secreted. It localises to the extracellular space. In terms of biological role, most important serine protease inhibitor in plasma that regulates the blood coagulation cascade. AT-III inhibits thrombin, matriptase-3/TMPRSS7, as well as factors IXa, Xa and XIa. Its inhibitory activity is greatly enhanced in the presence of heparin. The sequence is that of Antithrombin-III (Serpinc1) from Mus musculus (Mouse).